A 240-amino-acid polypeptide reads, in one-letter code: Eukaryotic translation initiation factor 3 subunit K (240 aa).

Residues Tyr41–Lys221 enclose the PCI domain.

This sequence belongs to the eIF-3 subunit K family. Component of the eukaryotic translation initiation factor 3 (eIF-3) complex.

It is found in the cytoplasm. In terms of biological role, component of the eukaryotic translation initiation factor 3 (eIF-3) complex, which is involved in protein synthesis of a specialized repertoire of mRNAs and, together with other initiation factors, stimulates binding of mRNA and methionyl-tRNAi to the 40S ribosome. The eIF-3 complex specifically targets and initiates translation of a subset of mRNAs involved in cell proliferation. This is Eukaryotic translation initiation factor 3 subunit K from Caenorhabditis briggsae.